A 463-amino-acid chain; its full sequence is Dialkyldecalin synthase (463 aa).

Residues Val13, 32–33 (ER), Ile121, and Asp275 contribute to the FAD site.

Belongs to the PheA/TfdB FAD monooxygenase family. In terms of assembly, homodimer. Requires FAD as cofactor.

The catalysed reaction is 4-[(2E,7S,8E,10E,13R,14R,16E,18E)-14-ethyl-7,13-dihydroxy-2,16,18-trimethylicosa-2,8,10,16,18-pentaenoyl]-2-methylidene-5-oxo-2,5-dihydro-1H-pyrrol-3-olate = 4-[(1R,2R,4aS,5S,8aR)-2-[(2R,3R,5E,7E)-3-ethyl-2-hydroxy-5,7-dimethylnona-5,7-dien-1-yl]-5-hydroxy-1-methyl-1,2,4a,5,6,7,8,8a-octahydronaphthalene-1-carbonyl]-2-methylidene-5-oxo-2,5-dihydro-1H-pyrrol-3-olate. It functions in the pathway antibiotic biosynthesis. Involved in the biosynthesis of the spirotetramate antibiotics pyrroindomycins. Catalyzes the intramolecular cyclization forming the dialkyldecalin moiety in pyrroindomycins, via an endo-selective [4+2] cycloaddition reaction. The polypeptide is Dialkyldecalin synthase (Streptomyces rugosporus).